Consider the following 372-residue polypeptide: Aminomethyltransferase (372 aa).

It belongs to the GcvT family. As to quaternary structure, the glycine cleavage system is composed of four proteins: P, T, L and H.

It carries out the reaction N(6)-[(R)-S(8)-aminomethyldihydrolipoyl]-L-lysyl-[protein] + (6S)-5,6,7,8-tetrahydrofolate = N(6)-[(R)-dihydrolipoyl]-L-lysyl-[protein] + (6R)-5,10-methylene-5,6,7,8-tetrahydrofolate + NH4(+). In terms of biological role, the glycine cleavage system catalyzes the degradation of glycine. The sequence is that of Aminomethyltransferase from Burkholderia ambifaria (strain MC40-6).